Here is a 94-residue protein sequence, read N- to C-terminus: Small ribosomal subunit protein uS19 (94 aa).

The segment at 75–94 is disordered; that stretch reads SHTRTFKGHAGDKKAAGSKR. Residues 83–94 are compositionally biased toward basic and acidic residues; it reads HAGDKKAAGSKR.

It belongs to the universal ribosomal protein uS19 family.

Functionally, protein S19 forms a complex with S13 that binds strongly to the 16S ribosomal RNA. The polypeptide is Small ribosomal subunit protein uS19 (Nitrosomonas europaea (strain ATCC 19718 / CIP 103999 / KCTC 2705 / NBRC 14298)).